A 357-amino-acid chain; its full sequence is Neuronal-specific septin-3 (357 aa).

Basic and acidic residues predominate over residues Met1–Thr10. The tract at residues Met1–Met29 is disordered. The 273-residue stretch at Thr58–Asp330 folds into the Septin-type G domain. A G1 motif region spans residues Gly68 to Ser75. Gly68–Ser75 is a GTP binding site. At Ser91 the chain carries Phosphoserine. Thr102 contributes to the GTP binding site. Residues Asp125–Gly128 form a G3 motif region. Residues Ala207–Asp210 form a G4 motif region. GTP is bound by residues Lys208–Glu216, Gly264, and Arg279.

The protein belongs to the TRAFAC class TrmE-Era-EngA-EngB-Septin-like GTPase superfamily. Septin GTPase family. Septins polymerize into heterooligomeric protein complexes that form filaments, and can associate with cellular membranes, actin filaments and microtubules. GTPase activity is required for filament formation. Phosphorylated by PKG on serine residues. Phosphorylated by PKG on Ser-91.

It is found in the cytoplasm. Its subcellular location is the cytoskeleton. It localises to the synapse. In terms of biological role, filament-forming cytoskeletal GTPase. May play a role in cytokinesis (Potential). This chain is Neuronal-specific septin-3, found in Bos taurus (Bovine).